The primary structure comprises 297 residues: 33 kDa chaperonin (297 aa).

Intrachain disulfides connect Cys-239/Cys-241 and Cys-272/Cys-275.

Belongs to the HSP33 family. In terms of processing, under oxidizing conditions two disulfide bonds are formed involving the reactive cysteines. Under reducing conditions zinc is bound to the reactive cysteines and the protein is inactive.

The protein resides in the cytoplasm. Its function is as follows. Redox regulated molecular chaperone. Protects both thermally unfolding and oxidatively damaged proteins from irreversible aggregation. Plays an important role in the bacterial defense system toward oxidative stress. This is 33 kDa chaperonin from Clostridium acetobutylicum (strain ATCC 824 / DSM 792 / JCM 1419 / IAM 19013 / LMG 5710 / NBRC 13948 / NRRL B-527 / VKM B-1787 / 2291 / W).